A 490-amino-acid polypeptide reads, in one-letter code: Cobyric acid synthase (490 aa).

Residues 252 to 439 form the GATase cobBQ-type domain; sequence RLKVVVPVLP…LHGLFESTAA (188 aa). The active-site Nucleophile is C333. H431 is an active-site residue.

Belongs to the CobB/CobQ family. CobQ subfamily.

Its pathway is cofactor biosynthesis; adenosylcobalamin biosynthesis. Its function is as follows. Catalyzes amidations at positions B, D, E, and G on adenosylcobyrinic A,C-diamide. NH(2) groups are provided by glutamine, and one molecule of ATP is hydrogenolyzed for each amidation. This chain is Cobyric acid synthase, found in Pseudomonas aeruginosa (strain ATCC 15692 / DSM 22644 / CIP 104116 / JCM 14847 / LMG 12228 / 1C / PRS 101 / PAO1).